Here is a 100-residue protein sequence, read N- to C-terminus: Large ribosomal subunit protein bL28 (100 aa).

It belongs to the bacterial ribosomal protein bL28 family.

The polypeptide is Large ribosomal subunit protein bL28 (Gluconobacter oxydans (strain 621H) (Gluconobacter suboxydans)).